Consider the following 365-residue polypeptide: Galactoside alpha-(1,2)-fucosyltransferase 1 (365 aa).

The Cytoplasmic portion of the chain corresponds to 1–8 (MWPLSHRH). A helical; Signal-anchor for type II membrane protein membrane pass occupies residues 9 to 25 (LCLAFLLVCVLSAISFF). The Lumenal portion of the chain corresponds to 26–365 (LHIYQDSIRH…LSPLWTLAEP (340 aa)). Asn65, Asn301, and Asn327 each carry an N-linked (GlcNAc...) asparagine glycan.

Belongs to the glycosyltransferase 11 family.

It is found in the golgi apparatus. The protein localises to the golgi stack membrane. The catalysed reaction is a beta-D-galactosyl-(1-&gt;4)-N-acetyl-beta-D-glucosaminyl derivative + GDP-beta-L-fucose = an alpha-L-Fuc-(1-&gt;2)-beta-D-Gal-(1-&gt;4)-beta-D-GlcNAc derivative + GDP + H(+). It catalyses the reaction a ganglioside GA1 + GDP-beta-L-fucose = a ganglioside Fuc-GA1 + GDP + H(+). The enzyme catalyses a beta-D-Gal-(1-&gt;3)-beta-D-GlcNAc-(1-&gt;3)-beta-D-Gal-(1-&gt;4)-beta-D-Glc-(1&lt;-&gt;1')-Cer(d18:1(4E)) + GDP-beta-L-fucose = alpha-L-fucosyl-(1-&gt;2)- beta-D-galactosyl-(1-&gt;3)-N-acetyl-beta-D-glucosaminyl-(1-&gt;3)-beta-D-galactosyl-(1-&gt;4)-beta-D-glucosyl-(1&lt;-&gt;1')-N-acylsphing-4-enine + GDP + H(+). It carries out the reaction a neolactoside nLc4Cer(d18:1(4E)) + GDP-beta-L-fucose = a neolactoside IV(2)-alpha-Fuc-nLc4Cer(d18:1(4E)) + GDP + H(+). The catalysed reaction is a ganglioside GM1 + GDP-beta-L-fucose = a ganglioside Fuc-GM1 + GDP + H(+). It catalyses the reaction beta-D-galactosyl-(1-&gt;3)-N-acetyl-D-galactosamine + GDP-beta-L-fucose = alpha-L-fucosyl-(1-&gt;2)-beta-D-galactosyl-(1-&gt;3)-N-acetyl-D-galactosamine + GDP + H(+). The protein operates within protein modification; protein glycosylation. Functionally, catalyzes the transfer of L-fucose, from a guanosine diphosphate-beta-L-fucose, to the terminal galactose residue of glycoconjugates through an alpha(1,2) linkage leading to H antigen synthesis that is an intermediate substrate in the synthesis of ABO blood group antigens. H antigen is essential for maturation of the glomerular layer of the main olfactory bulb, in cell migration and early cell-cell contacts during tumor associated angiogenesis. Preferentially fucosylates soluble lactose and to a lesser extent fucosylates glycolipids gangliosides GA1 and GM1a. This is Galactoside alpha-(1,2)-fucosyltransferase 1 from Mico humeralifer (Black and white tassel-ear marmoset).